The sequence spans 163 residues: Lipoprotein signal peptidase (163 aa).

The next 3 membrane-spanning stretches (helical) occupy residues 7-27 (LSFLWLSAVAFVIDLLTKYLV), 64-84 (WQKYFFIALALIISAVLVYLL), and 99-119 (ALIIGGALANMADRAYHGFVV). Residues aspartate 120 and aspartate 138 contribute to the active site. The chain crosses the membrane as a helical span at residues 133 to 153 (VFNVADIAICVGVGLLILDSF).

The protein belongs to the peptidase A8 family.

The protein localises to the cell inner membrane. The catalysed reaction is Release of signal peptides from bacterial membrane prolipoproteins. Hydrolyzes -Xaa-Yaa-Zaa-|-(S,diacylglyceryl)Cys-, in which Xaa is hydrophobic (preferably Leu), and Yaa (Ala or Ser) and Zaa (Gly or Ala) have small, neutral side chains.. It functions in the pathway protein modification; lipoprotein biosynthesis (signal peptide cleavage). Its function is as follows. This protein specifically catalyzes the removal of signal peptides from prolipoproteins. The chain is Lipoprotein signal peptidase from Actinobacillus succinogenes (strain ATCC 55618 / DSM 22257 / CCUG 43843 / 130Z).